The sequence spans 485 residues: Zinc finger SWIM domain-containing protein 1 (485 aa).

The segment at 363–405 (MNIQILEDTHKVQPQPPASCSCYFNQAFHLPCRHILAMLSARR) adopts an SWIM-type zinc-finger fold.

The protein is Zinc finger SWIM domain-containing protein 1 (ZSWIM1) of Homo sapiens (Human).